A 232-amino-acid polypeptide reads, in one-letter code: Large ribosomal subunit protein uL1 (232 aa).

It belongs to the universal ribosomal protein uL1 family. In terms of assembly, part of the 50S ribosomal subunit.

Its function is as follows. Binds directly to 23S rRNA. The L1 stalk is quite mobile in the ribosome, and is involved in E site tRNA release. In terms of biological role, protein L1 is also a translational repressor protein, it controls the translation of the L11 operon by binding to its mRNA. The sequence is that of Large ribosomal subunit protein uL1 from Rhizobium meliloti (strain 1021) (Ensifer meliloti).